The primary structure comprises 523 residues: Sodium-dependent lysophosphatidylcholine symporter 1-B (523 aa).

At 1-34 the chain is on the cytoplasmic side; that stretch reads MAKGEGAEQYTNTSLLQKPSPDEVKLAKHETKSR. The chain crosses the membrane as a helical span at residues 35 to 64; sequence LSVCSKLCYAIGGAPYQITGCAIGFFLQIY. At 65-75 the chain is on the extracellular side; that stretch reads LLDVALLDPFY. Residues 76 to 96 form a helical membrane-spanning segment; sequence ASIILFVGRAWDAVTDPTVGF. The Cytoplasmic portion of the chain corresponds to 97–108; the sequence is LVSRTPWTRFGR. A helical transmembrane segment spans residues 109–128; sequence MMPWIVLSTPFAVLCYFLIW. Topologically, residues 129–138 are extracellular; the sequence is YVPSVDQGKV. The helical transmembrane segment at 139 to 163 threads the bilayer; that stretch reads VWYLIFYCCFQTLQTCFHVPYSALT. Residues 164 to 170 lie on the Cytoplasmic side of the membrane; it reads MFISTEQ. The chain crosses the membrane as a helical span at residues 171–202; that stretch reads KERDSATAYRMTVEVLGTLIGTAIQGQIVGMA. Over 203–226 the chain is Extracellular; that stretch reads NAPCISTEIDLNSTGLEVAPDVNI. Cysteines 206 and 457 form a disulfide. Asn-214 and Asn-225 each carry an N-linked (GlcNAc...) asparagine glycan. Residues 227-260 traverse the membrane as a helical segment; that stretch reads TDPHVSLQDLRNAYMIASGVICAIYVVCAVVLFL. Residues 261–290 are Cytoplasmic-facing; that stretch reads GVKEQKDTCRVRTEPMSFFQGICMVMGHGP. The chain crosses the membrane as a helical span at residues 291-317; it reads YAKLVMGFLFTSLAFMLLEGNFALFCI. Topologically, residues 318 to 328 are extracellular; that stretch reads YNLGFRNDFQN. The chain crosses the membrane as a helical span at residues 329–347; sequence VLLVIMLSATLAIPFWQWF. Residues 348–351 are Cytoplasmic-facing; it reads LTKF. A helical membrane pass occupies residues 352 to 373; the sequence is GKKTAVYIGTTSVVPFLISVVL. Residues 374–376 are Extracellular-facing; sequence VPS. The helical transmembrane segment at 377–413 threads the bilayer; the sequence is SLAVTYIASFAAGVSVAAAFLLPWSMLPDVVDDFKVQ. The Cytoplasmic segment spans residues 414-423; that stretch reads NPESQGHEAI. The chain crosses the membrane as a helical span at residues 424-450; it reads FYSFYVFFTKFASGVSLGVSTLSLDFA. Over 451 to 462 the chain is Extracellular; that stretch reads GYVTRGCTQPGE. The chain crosses the membrane as a helical span at residues 463–486; it reads VKLTLKILVSAAPIVLIIIGLLIF. Residues 487 to 523 are Cytoplasmic-facing; the sequence is ISYPINEEKRQGNRKLLNEQRENEMDSETDSTELNVV. The tract at residues 504-523 is disordered; sequence NEQRENEMDSETDSTELNVV.

This sequence belongs to the major facilitator superfamily. In terms of tissue distribution, expressed in the developing nervous system.

The protein resides in the cell membrane. It is found in the endoplasmic reticulum membrane. It catalyses the reaction a 1-acyl-sn-glycero-3-phosphocholine(in) + Na(+)(in) = a 1-acyl-sn-glycero-3-phosphocholine(out) + Na(+)(out). The enzyme catalyses 1-(4Z,7Z,10Z,13Z,16Z,19Z-docosahexaenoyl)-sn-glycero-3-phosphocholine(in) + Na(+)(in) = 1-(4Z,7Z,10Z,13Z,16Z,19Z-docosahexaenoyl)-sn-glycero-3-phosphocholine(out) + Na(+)(out). It carries out the reaction 1-(9Z-octadecenoyl)-sn-glycero-3-phosphocholine(in) + Na(+)(in) = 1-(9Z-octadecenoyl)-sn-glycero-3-phosphocholine(out) + Na(+)(out). The catalysed reaction is 1-hexadecanoyl-sn-glycero-3-phosphocholine(in) + Na(+)(in) = 1-hexadecanoyl-sn-glycero-3-phosphocholine(out) + Na(+)(out). It catalyses the reaction a 1-acyl-sn-glycero-3-phosphoethanolamine(in) + Na(+)(in) = a 1-acyl-sn-glycero-3-phosphoethanolamine(out) + Na(+)(out). Its function is as follows. Sodium-dependent lysophosphatidylcholine (LPC) symporter, which plays an essential role for blood-brain barrier formation and function. Specifically expressed in endothelium of the blood-brain barrier of micro-vessels and transports LPC into the brain. Transport of LPC is essential because it constitutes the major mechanism by which docosahexaenoic acid (DHA), an omega-3 fatty acid that is essential for normal brain growth and cognitive function, enters the brain. Transports LPC carrying long-chain fatty acids such LPC oleate and LPC palmitate with a minimum acyl chain length of 14 carbons. Does not transport docosahexaenoic acid in unesterified fatty acid. This Danio rerio (Zebrafish) protein is Sodium-dependent lysophosphatidylcholine symporter 1-B (mfsd2ab).